Consider the following 122-residue polypeptide: Large ribosomal subunit protein uL14 (122 aa).

This sequence belongs to the universal ribosomal protein uL14 family. In terms of assembly, part of the 50S ribosomal subunit. Forms a cluster with proteins L3 and L19. In the 70S ribosome, L14 and L19 interact and together make contacts with the 16S rRNA in bridges B5 and B8.

Binds to 23S rRNA. Forms part of two intersubunit bridges in the 70S ribosome. This chain is Large ribosomal subunit protein uL14, found in Gemmatimonas aurantiaca (strain DSM 14586 / JCM 11422 / NBRC 100505 / T-27).